Consider the following 172-residue polypeptide: Adenine phosphoribosyltransferase (172 aa).

Belongs to the purine/pyrimidine phosphoribosyltransferase family. As to quaternary structure, homodimer.

It localises to the cytoplasm. It catalyses the reaction AMP + diphosphate = 5-phospho-alpha-D-ribose 1-diphosphate + adenine. Its pathway is purine metabolism; AMP biosynthesis via salvage pathway; AMP from adenine: step 1/1. Functionally, catalyzes a salvage reaction resulting in the formation of AMP, that is energically less costly than de novo synthesis. This Polynucleobacter necessarius subsp. necessarius (strain STIR1) protein is Adenine phosphoribosyltransferase.